Consider the following 347-residue polypeptide: Heme A synthase (347 aa).

8 helical membrane-spanning segments follow: residues 14 to 34, 96 to 116, 129 to 149, 162 to 182, 199 to 219, 260 to 280, 287 to 307, and 311 to 331; these read VKIWLCICCIGILIMVFIGGI, FHRLLGRIVGLVFLIPFLYFM, FILIAFLILVQGVMGWYMVKS, LAMHLLLALAIFYLLWKHFLL, VFYIIISLITIQITCGALVAG, FIHEVIALLILIIAVITLLVL, MYLLLALLLIQLTLGILTFIY, and IILASLHQVTAFILFASSIYL. Heme is bound at residue His262. His317 is a binding site for heme.

It belongs to the COX15/CtaA family. Type 2 subfamily. As to quaternary structure, interacts with CtaB. The cofactor is heme b.

The protein resides in the cell membrane. The catalysed reaction is Fe(II)-heme o + 2 A + H2O = Fe(II)-heme a + 2 AH2. It functions in the pathway porphyrin-containing compound metabolism; heme A biosynthesis; heme A from heme O: step 1/1. Catalyzes the conversion of heme O to heme A by two successive hydroxylations of the methyl group at C8. The first hydroxylation forms heme I, the second hydroxylation results in an unstable dihydroxymethyl group, which spontaneously dehydrates, resulting in the formyl group of heme A. In Ehrlichia ruminantium (strain Gardel), this protein is Heme A synthase.